A 467-amino-acid polypeptide reads, in one-letter code: Glutamate--tRNA ligase (467 aa).

Positions 9–19 match the 'HIGH' region motif; it reads PSPTGYLHIGG. Residues 237-241 carry the 'KMSKS' region motif; the sequence is KLSKR. K240 provides a ligand contact to ATP.

The protein belongs to the class-I aminoacyl-tRNA synthetase family. Glutamate--tRNA ligase type 1 subfamily. As to quaternary structure, monomer.

It localises to the cytoplasm. The catalysed reaction is tRNA(Glu) + L-glutamate + ATP = L-glutamyl-tRNA(Glu) + AMP + diphosphate. Its function is as follows. Catalyzes the attachment of glutamate to tRNA(Glu) in a two-step reaction: glutamate is first activated by ATP to form Glu-AMP and then transferred to the acceptor end of tRNA(Glu). The sequence is that of Glutamate--tRNA ligase from Xanthomonas oryzae pv. oryzae (strain MAFF 311018).